Consider the following 407-residue polypeptide: 1-deoxy-D-xylulose 5-phosphate reductoisomerase (407 aa).

Residues Thr25, Gly26, Ser27, Ile28, Asn53, and Asn136 each coordinate NADPH. Lys137 contacts 1-deoxy-D-xylulose 5-phosphate. Residue Glu138 participates in NADPH binding. Asp162 is a binding site for Mn(2+). 1-deoxy-D-xylulose 5-phosphate contacts are provided by Ser163, Glu164, Ser188, and His211. A Mn(2+)-binding site is contributed by Glu164. Gly217 is an NADPH binding site. Residues Ser224, Asn229, Lys230, and Glu233 each coordinate 1-deoxy-D-xylulose 5-phosphate. Mn(2+) is bound at residue Glu233.

This sequence belongs to the DXR family. Mg(2+) serves as cofactor. It depends on Mn(2+) as a cofactor.

It carries out the reaction 2-C-methyl-D-erythritol 4-phosphate + NADP(+) = 1-deoxy-D-xylulose 5-phosphate + NADPH + H(+). It functions in the pathway isoprenoid biosynthesis; isopentenyl diphosphate biosynthesis via DXP pathway; isopentenyl diphosphate from 1-deoxy-D-xylulose 5-phosphate: step 1/6. Catalyzes the NADPH-dependent rearrangement and reduction of 1-deoxy-D-xylulose-5-phosphate (DXP) to 2-C-methyl-D-erythritol 4-phosphate (MEP). The polypeptide is 1-deoxy-D-xylulose 5-phosphate reductoisomerase (Bradyrhizobium sp. (strain ORS 278)).